The primary structure comprises 173 residues: Putative phosphoesterase GK0864 (173 aa).

His-34 (proton donor) is an active-site residue. 2 short sequence motifs (HXTX) span residues 34-37 (HITL) and 115-118 (HITI). The active-site Proton acceptor is the His-115.

This sequence belongs to the 2H phosphoesterase superfamily. YjcG family.

The chain is Putative phosphoesterase GK0864 from Geobacillus kaustophilus (strain HTA426).